A 725-amino-acid chain; its full sequence is Glyoxysomal fatty acid beta-oxidation multifunctional protein MFP-a (725 aa).

It in the N-terminal section; belongs to the enoyl-CoA hydratase/isomerase family. This sequence in the central section; belongs to the 3-hydroxyacyl-CoA dehydrogenase family.

The protein resides in the glyoxysome. It carries out the reaction a (3S)-3-hydroxyacyl-CoA = a (2E)-enoyl-CoA + H2O. The enzyme catalyses a 4-saturated-(3S)-3-hydroxyacyl-CoA = a (3E)-enoyl-CoA + H2O. It catalyses the reaction a (3Z)-enoyl-CoA = a 4-saturated (2E)-enoyl-CoA. The catalysed reaction is a (3E)-enoyl-CoA = a 4-saturated (2E)-enoyl-CoA. It carries out the reaction (3S)-3-hydroxybutanoyl-CoA = (3R)-3-hydroxybutanoyl-CoA. The enzyme catalyses a (3S)-3-hydroxyacyl-CoA + NAD(+) = a 3-oxoacyl-CoA + NADH + H(+). Its pathway is lipid metabolism; fatty acid beta-oxidation. The protein is Glyoxysomal fatty acid beta-oxidation multifunctional protein MFP-a of Cucumis sativus (Cucumber).